A 498-amino-acid polypeptide reads, in one-letter code: Angiopoietin-1 (498 aa).

A signal peptide spans 1–15 (MTVFLSFAFLAAILT). Residues 81 to 119 (QKLQHLEHVMENYTQWLQKLENYIVENMKSEMAQIQQNA) are a coiled coil. N-linked (GlcNAc...) asparagine glycosylation is found at N92, N122, N154, N243, and N295. The stretch at 153–261 (LNQTSRLEIQ…LELMDTVHNL (109 aa)) forms a coiled coil. A Fibrinogen C-terminal domain is found at 277–497 (REEEKPFRDC…STTMMIRPLD (221 aa)). Cystine bridges form between C286/C315 and C439/C452.

In terms of assembly, homooligomer. Interacts with TEK/TIE2. Interacts with SVEP1/polydom. Interacts with THBD; this interaction significantly inhibits the generation of activated PC and TAFIa/CPB2 by the thrombin/thrombomodulin complex. Glycosylated.

It localises to the secreted. Functionally, binds and activates TEK/TIE2 receptor by inducing its dimerization and tyrosine phosphorylation. Plays an important role in the regulation of angiogenesis, endothelial cell survival, proliferation, migration, adhesion and cell spreading, reorganization of the actin cytoskeleton, but also maintenance of vascular quiescence. Required for normal angiogenesis and heart development during embryogenesis. After birth, activates or inhibits angiogenesis, depending on the context. Inhibits angiogenesis and promotes vascular stability in quiescent vessels, where endothelial cells have tight contacts. In quiescent vessels, ANGPT1 oligomers recruit TEK to cell-cell contacts, forming complexes with TEK molecules from adjoining cells, and this leads to preferential activation of phosphatidylinositol 3-kinase and the AKT1 signaling cascades. In migrating endothelial cells that lack cell-cell adhesions, ANGT1 recruits TEK to contacts with the extracellular matrix, leading to the formation of focal adhesion complexes, activation of PTK2/FAK and of the downstream kinases MAPK1/ERK2 and MAPK3/ERK1, and ultimately to the stimulation of sprouting angiogenesis. Mediates blood vessel maturation/stability. Implicated in endothelial developmental processes later and distinct from that of VEGF. Appears to play a crucial role in mediating reciprocal interactions between the endothelium and surrounding matrix and mesenchyme. This is Angiopoietin-1 (ANGPT1) from Homo sapiens (Human).